Reading from the N-terminus, the 259-residue chain is 5'-nucleotidase SurE (259 aa).

A divalent metal cation contacts are provided by aspartate 8, aspartate 9, serine 39, and asparagine 95.

Belongs to the SurE nucleotidase family. It depends on a divalent metal cation as a cofactor.

It localises to the cytoplasm. The catalysed reaction is a ribonucleoside 5'-phosphate + H2O = a ribonucleoside + phosphate. Its function is as follows. Nucleotidase that shows phosphatase activity on nucleoside 5'-monophosphates. The protein is 5'-nucleotidase SurE of Pseudothermotoga lettingae (strain ATCC BAA-301 / DSM 14385 / NBRC 107922 / TMO) (Thermotoga lettingae).